Here is a 342-residue protein sequence, read N- to C-terminus: MTDRNELIGVAIRVVAAAAVSFLSVRYLVKYLDPNYSVNEESKKKVAQLFHELGIDRQIELSEHEIRIATQFVGGEDVGADWDEIGGCEELVAELKDRIILPLRFASQSGSHLLSPPRGILLYGPPGCGKTLLAKAVARAAGCRFINLQVSNLTDKWYGESQKLAAAVFSVAQKFQPTIIFIDEIDSFLRDRQSHDHESTAMMKAQFMTLWDGFSSSGDQIIVMGATNRPRDVDAAILRRMTARFQVPVPNAKQRSQILNVILRNEKINNTVNLGEIAQAAEGLSGSDLKEVCRLALLARAKATVASGGSVNQLLPLEQSDFESAVHKYMRAAHLLVEETLD.

The Mitochondrial intermembrane portion of the chain corresponds to 1 to 6 (MTDRNE). The chain crosses the membrane as a helical span at residues 7–25 (LIGVAIRVVAAAAVSFLSV). Residues 26-342 (RYLVKYLDPN…AHLLVEETLD (317 aa)) are Cytoplasmic-facing. ATP is bound at residue 124–131 (GPPGCGKT).

This sequence belongs to the AAA ATPase family.

The protein resides in the mitochondrion outer membrane. Its function is as follows. Involved in intramitochondrial sorting of proteins. The polypeptide is Mitochondrial sorting homolog (mspn-1) (Caenorhabditis elegans).